Consider the following 126-residue polypeptide: Fluoride-specific ion channel FluC (126 aa).

A run of 4 helical transmembrane segments spans residues 2 to 22, 37 to 57, 65 to 85, and 99 to 119; these read LITV…RYLI, VGVL…VVLA, LSPF…AFSL, and AALY…LGMM. Residues G75 and T78 each coordinate Na(+).

This sequence belongs to the fluoride channel Fluc/FEX (TC 1.A.43) family.

It localises to the cell inner membrane. The catalysed reaction is fluoride(in) = fluoride(out). Its activity is regulated as follows. Na(+) is not transported, but it plays an essential structural role and its presence is essential for fluoride channel function. In terms of biological role, fluoride-specific ion channel. Important for reducing fluoride concentration in the cell, thus reducing its toxicity. The sequence is that of Fluoride-specific ion channel FluC from Ruegeria sp. (strain TM1040) (Silicibacter sp.).